A 363-amino-acid polypeptide reads, in one-letter code: MLFRIPTLFTLFLACFSLVSGVFGYSPMFGSNTIELNSKNFRKFVKAKGPSLVVFYAPWCGYCKKLVPTYQKLASNLHSLLPVTAVDCDADQNRAVCSQYQVQGFPTIKLVYPSSKGSSLSSTDYNGDRSYKSLQKFVSDSIPSKVKILTSEAKTQKFIQDAQNSSKVILISQKMKPTLLYKSLSNEFSSLPFSFMPAKANVNDLFNISAYVDTSDLPILFIKHPNNGTSFFSNSLNRDSIVEFLQSSIKDNNFSEYLATFCSKKSCIITIQDKDSDSGIDESIRKKYPKLHFVRLGRNTTVAERLEDTLDLGYSDTFLLSLKKSHYNAKPYGKPLRRWLEDIQVQQAGPSVSLPNDLLSKIK.

Residues 1-24 (MLFRIPTLFTLFLACFSLVSGVFG) constitute a mitochondrion transit peptide. The Thioredoxin domain maps to 32 to 141 (NTIELNSKNF…KSLQKFVSDS (110 aa)).

It localises to the mitochondrion. The sequence is that of Thioredoxin domain-containing protein C13F5.05, mitochondrial from Schizosaccharomyces pombe (strain 972 / ATCC 24843) (Fission yeast).